The following is a 434-amino-acid chain: Tol-Pal system protein TolB (434 aa).

Positions 1–28 are cleaved as a signal peptide; sequence MQQTCKRKIWMQISVALVTSLWMISAQA.

Belongs to the TolB family. In terms of assembly, the Tol-Pal system is composed of five core proteins: the inner membrane proteins TolA, TolQ and TolR, the periplasmic protein TolB and the outer membrane protein Pal. They form a network linking the inner and outer membranes and the peptidoglycan layer.

The protein resides in the periplasm. Its function is as follows. Part of the Tol-Pal system, which plays a role in outer membrane invagination during cell division and is important for maintaining outer membrane integrity. This Alcanivorax borkumensis (strain ATCC 700651 / DSM 11573 / NCIMB 13689 / SK2) protein is Tol-Pal system protein TolB.